Here is a 51-residue protein sequence, read N- to C-terminus: Large ribosomal subunit protein eL39 (51 aa).

The disordered stretch occupies residues 1 to 23; that stretch reads MSALKKSFIKRKLAKKQKQNRPM. Basic residues predominate over residues 7 to 19; the sequence is SFIKRKLAKKQKQ.

It belongs to the eukaryotic ribosomal protein eL39 family. As to quaternary structure, interacts with impact.

The sequence is that of Large ribosomal subunit protein eL39 (rpl-39) from Caenorhabditis elegans.